The sequence spans 133 residues: Large ribosomal subunit protein bL17 (133 aa).

The protein belongs to the bacterial ribosomal protein bL17 family. In terms of assembly, part of the 50S ribosomal subunit. Contacts protein L32.

The sequence is that of Large ribosomal subunit protein bL17 from Nitratidesulfovibrio vulgaris (strain DSM 19637 / Miyazaki F) (Desulfovibrio vulgaris).